A 2234-amino-acid chain; its full sequence is Bridge-like lipid transfer protein family member 2 (2234 aa).

A signal peptide spans 1 to 31 (MPLFLSALLVLLLVALSALFLGRWLVVRLAT). The interval 29-108 (LATRWCQRKL…LQKVSSLSAP (80 aa)) is transmembrane domain. A Phosphoserine modification is found at Ser563. Residues 1496-1529 (QMSAKKPKRGIPPSAQVPPHVSTPSFSGRPDKGS) form a disordered region. A coiled-coil region spans residues 1814–1885 (ILHLQEAVRQ…LNILIRCFKD (72 aa)). A phosphoserine mark is found at Ser1846 and Ser2090.

This sequence belongs to the SABRE family.

The protein localises to the cell membrane. Its subcellular location is the endoplasmic reticulum membrane. It is found in the mitochondrion membrane. In terms of biological role, tube-forming lipid transport protein which binds to phosphatidylinositols and affects phosphatidylinositol-4,5-bisphosphate (PtdIns-4,5-P2) distribution. The chain is Bridge-like lipid transfer protein family member 2 (Bltp2) from Mus musculus (Mouse).